Consider the following 197-residue polypeptide: Beta-crystallin A2 (197 aa).

Residues 1 to 11 (MSSASAPGPAP) are N-terminal arm. Beta/gamma crystallin 'Greek key' domains are found at residues 12–52 (ACLT…KVEN) and 53–99 (GAWV…RPVL). Positions 100 to 105 (CANHSD) are connecting peptide. 2 consecutive Beta/gamma crystallin 'Greek key' domains span residues 106–147 (SRVT…KVSS) and 148–196 (GAWV…RRVQ).

Belongs to the beta/gamma-crystallin family. Homo/heterodimer, or complexes of higher-order. The structure of beta-crystallin oligomers seems to be stabilized through interactions between the N-terminal arms.

In terms of biological role, crystallins are the dominant structural components of the vertebrate eye lens. In Oryctolagus cuniculus (Rabbit), this protein is Beta-crystallin A2 (CRYBA2).